Reading from the N-terminus, the 312-residue chain is Malate dehydrogenase (312 aa).

Residues 7 to 13 (GAAGGIG) and aspartate 34 each bind NAD(+). Substrate is bound by residues arginine 81 and arginine 87. Residues asparagine 94 and 117–119 (ITN) each bind NAD(+). Residues asparagine 119 and arginine 153 each coordinate substrate. Histidine 177 (proton acceptor) is an active-site residue. Methionine 228 contributes to the NAD(+) binding site.

Belongs to the LDH/MDH superfamily. MDH type 1 family. Homodimer.

The catalysed reaction is (S)-malate + NAD(+) = oxaloacetate + NADH + H(+). Catalyzes the reversible oxidation of malate to oxaloacetate. This chain is Malate dehydrogenase, found in Mannheimia succiniciproducens (strain KCTC 0769BP / MBEL55E).